Here is a 393-residue protein sequence, read N- to C-terminus: Sulfite oxidase (393 aa).

The disordered stretch occupies residues 1–27 (MPGIRGPSEYSQEPPRHPSLKVNAKEP). The interval 10–242 (YSQEPPRHPS…QGFFMQKDYK (233 aa)) is moco domain. Residues 49 to 53 (YKRNH), Cys98, 159 to 161 (SVD), His202, Arg207, and 218 to 220 (SVK) contribute to the Mo-molybdopterin site. The homodimerization stretch occupies residues 243–393 (MFPPSVNWDN…VLLRLGHSNL (151 aa)). Positions 391 to 393 (SNL) match the Microbody targeting signal motif.

Predominantly monomer; also homodimer. The cofactor is Mo-molybdopterin.

The protein localises to the peroxisome. The enzyme catalyses sulfite + O2 + H2O = sulfate + H2O2. It participates in energy metabolism; sulfur metabolism. Probably involved in sulfite oxidative detoxification. This is Sulfite oxidase (SOX) from Arabidopsis thaliana (Mouse-ear cress).